A 351-amino-acid chain; its full sequence is Tsukushi-A (351 aa).

The first 17 residues, 1 to 17 (MALSSWIFFLLVHGIVG), serve as a signal peptide directing secretion. LRR repeat units follow at residues 59-82 (PLDT…VLSG), 85-108 (YTTL…TFSK), 109-132 (LRYL…SFLY), 134-155 (RLTE…AFTL), 158-181 (QGRS…AERP), 182-203 (VPNI…DLHG), 204-226 (IPLR…SFLG), 252-276 (LTSL…MFFG), and 277-300 (LKAL…IMLH).

As to quaternary structure, interacts with bmp4. Interacts with dll1 (via extracellular region). Interacts with fgf8; inhibits fgf8 signaling. Interacts with nodal2/Xnr2; enhances nodal2 activity. During embryogenesis, localized to the animal hemisphere during late blastula and gastrula stages. At stage 10, expression is also detected around the dorsal blastopore lip. Expressed in the mandibular crest segment, branchial crest segment and differentiating somites at stage 21/22. Expressed in the germ ring including the shield at shield stage and in the tailbud at the 10-somite stage. At the early neurula stage (stage 13), expression is hardly detectable in the presumptive neural plate region, and restricted to the non-neural ectoderm where its levels increase by stage 14, especially in the presumptive anterior neural fold. Also expressed in the prospective cranial neural crest. At the early tailbud stage (stage 23), expressed in cranial neural crest cells, the dorsal retina and the lens placode.

It is found in the secreted. Contributes to various developmental events through its interactions with multiple signaling pathways. Dorsalizing factor which functions as an inhibitor of bone morphogenetic proteins (BMP) during gastrulation. Promotes dll1-dependent activation of Notch signaling and is required for neural crest formation. Induces endoderm and dorsal mesoderm formation by enhancing nodal2/Xnr2 activity while inhibiting ventrolateral mesoderm formation through inhibition of fgf8. The chain is Tsukushi-A from Xenopus laevis (African clawed frog).